Here is a 106-residue protein sequence, read N- to C-terminus: Small ribosomal subunit protein uS10 (106 aa).

This sequence belongs to the universal ribosomal protein uS10 family. As to quaternary structure, part of the 30S ribosomal subunit.

Functionally, involved in the binding of tRNA to the ribosomes. The polypeptide is Small ribosomal subunit protein uS10 (Prochlorococcus marinus subsp. pastoris (strain CCMP1986 / NIES-2087 / MED4)).